The following is a 149-amino-acid chain: CyanoQ (149 aa).

Positions 1–21 (MSRLRSLLSLILVLVTTVLVS) are cleaved as a signal peptide. Residue Cys-22 is the site of N-palmitoyl cysteine attachment. Cys-22 is lipidated: S-diacylglycerol cysteine.

It belongs to the PsbQ family. CyanoQ subfamily. In terms of assembly, PSII is composed of 1 copy each of membrane proteins PsbA, PsbB, PsbC, PsbD, PsbE, PsbF, PsbH, PsbI, PsbJ, PsbK, PsbL, PsbM, PsbT, PsbX, PsbY, PsbZ, Psb30/Ycf12, peripheral proteins PsbO, CyanoQ (PsbQ), PsbU, PsbV and a large number of cofactors. It forms dimeric complexes. Pull-down experiments with His-tagged PsbQ pull down dimeric, but not monomeric, PSII. In terms of processing, the N-terminus is blocked. Upon expression in E.coli the N-terminus is modified with a diacylglycerol and an acyl group bound to two palmitates and one palmitoleate.

The protein localises to the cellular thylakoid membrane. Functionally, one of the extrinsic, lumenal subunits of photosystem II (PSII), which stabilize and protect the oxygen-evolving complex. PSII is a light-driven water plastoquinone oxidoreductase, using light energy to abstract electrons from H(2)O, generating a proton gradient subsequently used for ATP formation. Plays a role in the stability of the oxygen-evolving center on the luminal side of PSII. Required for optimal photoautotrophic growth in the absence of Ca(2+) or Cl(-), functions in optimizing PSII water oxidation/O(2) evolving activity. Requires PsbO to bind to PSII. The protein is CyanoQ of Synechocystis sp. (strain ATCC 27184 / PCC 6803 / Kazusa).